A 438-amino-acid chain; its full sequence is MSDLTPREIVSELDRFIIGQSDAKRAVAVALRNRWRRKQLGDDLRDEVYPKNILMIGPTGVGKTEISRRLAKLAKAPFIKVEATKFTEVGYVGRDVEQIIRDLVDAAQVMIRENMREEVKAKAHDAAEERVIEALAGKDAREQTRDMFRKKLRAGELDDTVIELEVADNSNPLGGFEIPSQPGGMGGMGPGMMNLGDLFKGMGGRTVKRRLTVAASYDLLIEDEADKLLDAETVTKEALSAVEQSGIVFIDEIDKVCAKSDARGADVSREGVQRDLLPLIEGTTVSTKHGPVKTDHILFIASGAFHIAKPSDLLPELQGRLPIRVNLRALTEDDFVRILTETDNALTRQYTALMATEEVAVEFTDGGIRALAHIAAEVNESVENIGARRLYTVLERVFEELSFTAPDRSGDAVTVDEAFVEQNLGELTRSTDLSRYVL.

ATP-binding positions include I18, 60–65, D251, E316, and R388; that span reads GVGKTE.

The protein belongs to the ClpX chaperone family. HslU subfamily. A double ring-shaped homohexamer of HslV is capped on each side by a ring-shaped HslU homohexamer. The assembly of the HslU/HslV complex is dependent on binding of ATP.

It is found in the cytoplasm. Functionally, ATPase subunit of a proteasome-like degradation complex; this subunit has chaperone activity. The binding of ATP and its subsequent hydrolysis by HslU are essential for unfolding of protein substrates subsequently hydrolyzed by HslV. HslU recognizes the N-terminal part of its protein substrates and unfolds these before they are guided to HslV for hydrolysis. The chain is ATP-dependent protease ATPase subunit HslU from Jannaschia sp. (strain CCS1).